Consider the following 369-residue polypeptide: Aminomethyltransferase (369 aa).

It belongs to the GcvT family. The glycine cleavage system is composed of four proteins: P, T, L and H.

The enzyme catalyses N(6)-[(R)-S(8)-aminomethyldihydrolipoyl]-L-lysyl-[protein] + (6S)-5,6,7,8-tetrahydrofolate = N(6)-[(R)-dihydrolipoyl]-L-lysyl-[protein] + (6R)-5,10-methylene-5,6,7,8-tetrahydrofolate + NH4(+). The glycine cleavage system catalyzes the degradation of glycine. The sequence is that of Aminomethyltransferase from Xanthomonas axonopodis pv. citri (strain 306).